The following is a 290-amino-acid chain: 4-hydroxybenzoate octaprenyltransferase (290 aa).

Helical transmembrane passes span isoleucine 24–isoleucine 44, valine 48–asparagine 68, leucine 98–isoleucine 118, phenylalanine 142–isoleucine 162, tryptophan 171–isoleucine 191, phenylalanine 214–glutamate 234, valine 239–isoleucine 259, and alanine 270–histidine 290.

The protein belongs to the UbiA prenyltransferase family. Mg(2+) is required as a cofactor.

It localises to the cell inner membrane. It carries out the reaction all-trans-octaprenyl diphosphate + 4-hydroxybenzoate = 4-hydroxy-3-(all-trans-octaprenyl)benzoate + diphosphate. It functions in the pathway cofactor biosynthesis; ubiquinone biosynthesis. Functionally, catalyzes the prenylation of para-hydroxybenzoate (PHB) with an all-trans polyprenyl group. Mediates the second step in the final reaction sequence of ubiquinone-8 (UQ-8) biosynthesis, which is the condensation of the polyisoprenoid side chain with PHB, generating the first membrane-bound Q intermediate 3-octaprenyl-4-hydroxybenzoate. This chain is 4-hydroxybenzoate octaprenyltransferase, found in Blochmanniella pennsylvanica (strain BPEN).